The chain runs to 171 residues: Protein-export protein SecB (171 aa).

Belongs to the SecB family. In terms of assembly, homotetramer, a dimer of dimers. One homotetramer interacts with 1 SecA dimer.

It localises to the cytoplasm. One of the proteins required for the normal export of preproteins out of the cell cytoplasm. It is a molecular chaperone that binds to a subset of precursor proteins, maintaining them in a translocation-competent state. It also specifically binds to its receptor SecA. In Xanthomonas oryzae pv. oryzae (strain MAFF 311018), this protein is Protein-export protein SecB.